The sequence spans 165 residues: UPF0114 protein Ent638_3411 (165 aa).

A run of 3 helical transmembrane segments spans residues 15–35, 53–73, and 136–156; these read LLAPVYFGLSLALVALSIKFF, LILVLLSLVDMTLVGGLLVMV, and LMWYVIIHLTFVLSAFVMGYL.

This sequence belongs to the UPF0114 family.

It localises to the cell membrane. The protein is UPF0114 protein Ent638_3411 of Enterobacter sp. (strain 638).